We begin with the raw amino-acid sequence, 153 residues long: 3-hydroxyacyl-[acyl-carrier-protein] dehydratase FabZ (153 aa).

The active site involves H47.

Belongs to the thioester dehydratase family. FabZ subfamily.

It is found in the cytoplasm. The catalysed reaction is a (3R)-hydroxyacyl-[ACP] = a (2E)-enoyl-[ACP] + H2O. Involved in unsaturated fatty acids biosynthesis. Catalyzes the dehydration of short chain beta-hydroxyacyl-ACPs and long chain saturated and unsaturated beta-hydroxyacyl-ACPs. The sequence is that of 3-hydroxyacyl-[acyl-carrier-protein] dehydratase FabZ from Myxococcus xanthus (strain DK1622).